A 188-amino-acid polypeptide reads, in one-letter code: uncharacterized protein (188 aa).

Residues 121–139 form a helical membrane-spanning segment; that stretch reads IWLYGGASLITTFINLGLV.

This sequence to B.subtilis YwjB.

Its subcellular location is the membrane. This is an uncharacterized protein from Bacillus subtilis (strain 168).